Reading from the N-terminus, the 231-residue chain is Probable tetraspanin tspE (231 aa).

Residues 1-21 are Cytoplasmic-facing; sequence MTFVDNFEFNQNTPRLVRGPF. A helical transmembrane segment spans residues 22 to 42; it reads IILNSIIFSLSFILLCSTGII. Residues 43 to 58 lie on the Extracellular side of the membrane; sequence IYYLNEYYLVKDLTIP. The helical transmembrane segment at 59–79 threads the bilayer; it reads LGSFILSAYMVITTIVGGIAI. At 80–83 the chain is on the cytoplasmic side; sequence WKKK. Residues 84-104 traverse the membrane as a helical segment; that stretch reads LGLHLTFMVFLVVLIVCLVGV. Over 105-195 the chain is Extracellular; sequence SAKMIVDSGN…VESILKYLGY (91 aa). Residues 196 to 216 form a helical membrane-spanning segment; the sequence is YGIVLSVIELILLILSGFFLL. Residues 217–231 are Cytoplasmic-facing; it reads KTNKNVKSKSFILQD.

Belongs to the tetraspanin (TM4SF) family.

The protein resides in the membrane. The sequence is that of Probable tetraspanin tspE (tspE) from Dictyostelium discoideum (Social amoeba).